Consider the following 1744-residue polypeptide: Complement C4-B (1744 aa).

An N-terminal signal peptide occupies residues 1–19 (MRLLWGLIWASSFFTLSLQ). The cysteines at positions 68 and 97 are disulfide-linked. N-linked (GlcNAc...) asparagine glycosylation is present at Asn226. Cys635 and Cys669 are oxidised to a cystine. The propeptide occupies 676 to 679 (RKKR). Disulfide bonds link Cys702-Cys728, Cys703-Cys735, and Cys716-Cys736. Positions 702 to 736 (CCQDGVTRLPMMRSCEQRAARVQQPDCREPFLSCC) constitute an Anaphylatoxin-like domain. A glycan (N-linked (GlcNAc...) asparagine) is linked at Asn862. Ser918 is subject to Phosphoserine. Residues 1010-1013 (CGEQ) constitute a cross-link (isoglutamyl cysteine thioester (Cys-Gln)). N-linked (GlcNAc...) asparagine glycosylation is found at Asn1328 and Asn1391. A sulfotyrosine mark is found at Tyr1417, Tyr1420, and Tyr1422. A propeptide spanning residues 1447–1453 (RRNRRRR) is cleaved from the precursor. 5 cysteine pairs are disulfide-bonded: Cys1471–Cys1535, Cys1583–Cys1588, Cys1595–Cys1673, Cys1618–Cys1742, and Cys1718–Cys1727. An NTR domain is found at 1595-1742 (CPRQRRALER…FLQEYGTQGC (148 aa)).

In terms of assembly, in absence of complement activation, circulates in blood as a disulfide-linked trimer of an alpha, beta and gamma chain. Complement C4b is composed of complement C4b-A, complement C4 beta and complement C4 gamma chains that are associated via disulfide bonds. Non-enzymatic component of the C3 convertase, also named C4bC2b, composed of the serine protease complement C2b (C2), as well as complement C4b. Non-enzymatic component of the C5 convertase, also named C4bC2bC3b, composed of the serine protease complement C2b (C2), complement C3b, as well as complement C4b. Interacts with CR1 (via Sushi 1 and Sushi 2 domains). As to quaternary structure, (Microbial infection) Binds B.burgdorferi OspC, the interaction is inhibited by complement factor C2. This binding may inhibit the complement cascade and allow the bacteria to survive in the host bloodstream. Post-translationally, prior to secretion, the single-chain precursor is enzymatically cleaved by plasminogen (PLG) to yield non-identical chains alpha, beta and gamma. During activation of the complement systems, the alpha chain is cleaved into C4a and C4b by different proteases depending on the complement pathway: C4b stays linked to the beta and gamma chains, while C4a is released in the plasma. The alpha chain is cleaved by C1S to generate C4a and C4b following activation by the classical complement system. The alpha chain is cleaved to generate C4a and C4b by MASP2 following activation by the lectin complement system. The alpha chain is cleaved by GZMK to generate C4a and C4b following activation by the GZMK complement system. Further degradation of C4b by C1 into the inactive fragments C4c and C4d blocks the generation of C3 convertase. The proteolytic cleavages often are incomplete so that many structural forms can be found in plasma. Upon activation, the internal thioester bond reacts with carbohydrate antigens on the target surface to form amide or ester bonds, leading to covalent association with the surface of pathogens. In terms of processing, complement C4b interacts with complement C3b via a thioester linkage. Post-translationally, N- and O-glycosylated. O-glycosylated with a core 1 or possibly core 8 glycan. As to expression, complement component C4 is expressed at highest levels in the liver, at moderate levels in the adrenal cortex, adrenal medulla, thyroid gland, and the kidney, and at lowest levels in the heart, ovary, small intestine, thymus, pancreas and spleen. The extra-hepatic sites of expression may be important for the local protection and inflammatory response.

It is found in the secreted. It localises to the synapse. The protein resides in the cell projection. The protein localises to the axon. Its subcellular location is the dendrite. It is found in the cell surface. Its function is as follows. Precursor of non-enzymatic components of the classical, lectin and GZMK complement pathways, which consist in a cascade of proteins that leads to phagocytosis and breakdown of pathogens and signaling that strengthens the adaptive immune system. Functionally, non-enzymatic component of C3 and C5 convertases. Generated following cleavage by complement proteases (C1S, MASP2 or GZMK, depending on the complement pathway), it covalently attaches to the surface of pathogens, where it acts as an opsonin that marks the surface of antigens for removal. It then recruits the serine protease complement C2b to form the C3 and C5 convertases, which cleave and activate C3 and C5, respectively, the next components of the complement pathways. Complement C4b-B isotype catalyzes the transacylation of the thioester carbonyl group to form ester bonds with carbohydrate antigens, while C4b-A isotype is responsible for effective binding to form amide bonds with immune aggregates or protein antigens. In terms of biological role, putative humoral mediator released following cleavage by complement proteases (C1S, MASP2 or GZMK, depending on the complement pathway). While it is strongly similar to anaphylatoxins, its role is unclear. Was reported to act as a mediator of local inflammatory process; however these effects were probably due to contamination with C3a and/C5a anaphylatoxins in biological assays. The sequence is that of Complement C4-B from Homo sapiens (Human).